Reading from the N-terminus, the 496-residue chain is Probable cytosol aminopeptidase (496 aa).

Residues Lys258 and Asp263 each contribute to the Mn(2+) site. Lys270 is an active-site residue. Asp281, Asp340, and Glu342 together coordinate Mn(2+). Arg344 is an active-site residue.

The protein belongs to the peptidase M17 family. Mn(2+) is required as a cofactor.

It localises to the cytoplasm. The enzyme catalyses Release of an N-terminal amino acid, Xaa-|-Yaa-, in which Xaa is preferably Leu, but may be other amino acids including Pro although not Arg or Lys, and Yaa may be Pro. Amino acid amides and methyl esters are also readily hydrolyzed, but rates on arylamides are exceedingly low.. It catalyses the reaction Release of an N-terminal amino acid, preferentially leucine, but not glutamic or aspartic acids.. In terms of biological role, presumably involved in the processing and regular turnover of intracellular proteins. Catalyzes the removal of unsubstituted N-terminal amino acids from various peptides. In Helicobacter pylori (strain P12), this protein is Probable cytosol aminopeptidase.